Reading from the N-terminus, the 497-residue chain is Probable pyruvate kinase, cytosolic isozyme (497 aa).

Substrate is bound at residue Arg-37. K(+) is bound by residues Asn-39, Ser-41, Asp-71, and Thr-72. 39–42 (NFSH) provides a ligand contact to ATP. The ATP site is built by Arg-78 and Lys-163. Lys-227 lines the substrate pocket. Glu-229 lines the Mg(2+) pocket. Substrate contacts are provided by Gly-252, Asp-253, and Thr-285. Asp-253 contributes to the Mg(2+) binding site.

This sequence belongs to the pyruvate kinase family. As to quaternary structure, homotetramer. It depends on Mg(2+) as a cofactor. K(+) is required as a cofactor.

The protein resides in the cytoplasm. Its subcellular location is the cytosol. It catalyses the reaction pyruvate + ATP = phosphoenolpyruvate + ADP + H(+). The protein operates within carbohydrate degradation; glycolysis; pyruvate from D-glyceraldehyde 3-phosphate: step 5/5. Its function is as follows. Key regulatory enzyme of the glycolytic pathway that catalyzes the final step of glycolysis, converting ADP and phosphoenolpyruvate (PEP) to ATP and pyruvate by essentially irreversible transphosphorylation. The protein is Probable pyruvate kinase, cytosolic isozyme of Arabidopsis thaliana (Mouse-ear cress).